The sequence spans 289 residues: Phosphatidylserine decarboxylase proenzyme (289 aa).

Active-site charge relay system; for autoendoproteolytic cleavage activity residues include aspartate 89, histidine 146, and serine 252. The active-site Schiff-base intermediate with substrate; via pyruvic acid; for decarboxylase activity is the serine 252. Serine 252 is modified (pyruvic acid (Ser); by autocatalysis).

It belongs to the phosphatidylserine decarboxylase family. PSD-B subfamily. Prokaryotic type I sub-subfamily. Heterodimer of a large membrane-associated beta subunit and a small pyruvoyl-containing alpha subunit. The cofactor is pyruvate. Post-translationally, is synthesized initially as an inactive proenzyme. Formation of the active enzyme involves a self-maturation process in which the active site pyruvoyl group is generated from an internal serine residue via an autocatalytic post-translational modification. Two non-identical subunits are generated from the proenzyme in this reaction, and the pyruvate is formed at the N-terminus of the alpha chain, which is derived from the carboxyl end of the proenzyme. The autoendoproteolytic cleavage occurs by a canonical serine protease mechanism, in which the side chain hydroxyl group of the serine supplies its oxygen atom to form the C-terminus of the beta chain, while the remainder of the serine residue undergoes an oxidative deamination to produce ammonia and the pyruvoyl prosthetic group on the alpha chain. During this reaction, the Ser that is part of the protease active site of the proenzyme becomes the pyruvoyl prosthetic group, which constitutes an essential element of the active site of the mature decarboxylase.

The protein localises to the cell membrane. It carries out the reaction a 1,2-diacyl-sn-glycero-3-phospho-L-serine + H(+) = a 1,2-diacyl-sn-glycero-3-phosphoethanolamine + CO2. It functions in the pathway phospholipid metabolism; phosphatidylethanolamine biosynthesis; phosphatidylethanolamine from CDP-diacylglycerol: step 2/2. Its function is as follows. Catalyzes the formation of phosphatidylethanolamine (PtdEtn) from phosphatidylserine (PtdSer). The polypeptide is Phosphatidylserine decarboxylase proenzyme (Shewanella putrefaciens (strain CN-32 / ATCC BAA-453)).